Reading from the N-terminus, the 160-residue chain is uncharacterized protein (160 aa).

At 1–33 (MPLRPCRHHQGFLPKKQWRAKFPQLIVLMGRVA) the chain is on the extracellular side. A helical membrane pass occupies residues 34-54 (AEELLPAVAVAAVVVAVVVAV). Residues 55-68 (ERVVPLLFVHRPDS) are Cytoplasmic-facing. Residues 69-89 (FFLIFFFQSCFVCCCCCCSCS) traverse the membrane as a helical segment. At 90–119 (TSLKAYSSEKEKQKYGKRGNGNTPLVQRLV) the chain is on the extracellular side. A helical transmembrane segment spans residues 120 to 140 (TLSYLALLILVLSIELLTWFV). Over 141–160 (KKQRTGNKKQKDKEKNALLL) the chain is Cytoplasmic.

The protein localises to the membrane. This is an uncharacterized protein from Saccharomyces cerevisiae (strain ATCC 204508 / S288c) (Baker's yeast).